The following is a 366-amino-acid chain: 3-dehydroquinate synthase (366 aa).

NAD(+)-binding positions include 69–74, 103–107, 127–128, Lys-140, Lys-149, and 167–170; these read DGEAHK, GVIGD, TT, and TLNT. Residues Glu-182, His-245, and His-262 each coordinate Zn(2+).

Belongs to the sugar phosphate cyclases superfamily. Dehydroquinate synthase family. Co(2+) is required as a cofactor. Requires Zn(2+) as cofactor. The cofactor is NAD(+).

The protein resides in the cytoplasm. The enzyme catalyses 7-phospho-2-dehydro-3-deoxy-D-arabino-heptonate = 3-dehydroquinate + phosphate. It functions in the pathway metabolic intermediate biosynthesis; chorismate biosynthesis; chorismate from D-erythrose 4-phosphate and phosphoenolpyruvate: step 2/7. Its function is as follows. Catalyzes the conversion of 3-deoxy-D-arabino-heptulosonate 7-phosphate (DAHP) to dehydroquinate (DHQ). This chain is 3-dehydroquinate synthase, found in Pseudomonas fluorescens (strain SBW25).